The sequence spans 224 residues: Ribose-5-phosphate isomerase A 2 (224 aa).

Residues 27-30, 83-86, and 96-99 contribute to the substrate site; these read SGST, DGTD, and KGGG. Glutamate 105 functions as the Proton acceptor in the catalytic mechanism. Lysine 123 provides a ligand contact to substrate.

This sequence belongs to the ribose 5-phosphate isomerase family. Homodimer.

The catalysed reaction is aldehydo-D-ribose 5-phosphate = D-ribulose 5-phosphate. Its pathway is carbohydrate degradation; pentose phosphate pathway; D-ribose 5-phosphate from D-ribulose 5-phosphate (non-oxidative stage): step 1/1. Functionally, catalyzes the reversible conversion of ribose-5-phosphate to ribulose 5-phosphate. The chain is Ribose-5-phosphate isomerase A 2 from Oceanobacillus iheyensis (strain DSM 14371 / CIP 107618 / JCM 11309 / KCTC 3954 / HTE831).